Consider the following 586-residue polypeptide: Arrestin-related trafficking adapter 5 (586 aa).

2 disordered regions span residues 123-145 (GENA…DMDT) and 182-217 (ENGV…YSNR). Positions 126–145 (AENQHNSSSGRSTSNQDMDT) are enriched in polar residues. Low complexity predominate over residues 199-216 (SRSSSSNTLNNNSHSYSN). A Glycyl lysine isopeptide (Lys-Gly) (interchain with G-Cter in ubiquitin) cross-link involves residue K364.

The protein belongs to the arrestin family. In terms of assembly, interacts with RSP5. Post-translationally, ubiquitinated by RSP5.

Functionally, may regulate endocytosis by recruiting RSP5 ubiquitin ligase activity to specific plasma membrane proteins in response to extracellular stimuli. The polypeptide is Arrestin-related trafficking adapter 5 (ART5) (Saccharomyces cerevisiae (strain ATCC 204508 / S288c) (Baker's yeast)).